The following is a 385-amino-acid chain: Multicilin (385 aa).

Residues 1–130 (MQACGGGAAG…TVDDLISDSS (130 aa)) form a necessary and sufficient for its degradation during the cell cycle region. The tract at residues 86–111 (SSLLGSDAPPGGDLAASQNHSHQTEA) is disordered. A necessary and sufficient for proper nuclear localization region spans residues 131–385 (SMMSPTLASG…GGYKFRWVPS (255 aa)). The segment at 173 to 245 (PDVPPPEQYW…SVLDKLMITQ (73 aa)) is necessary and sufficient for interaction with GMNN and sufficient for homodimerization. Positions 179 to 227 (EQYWKEVADQNQRALGDALVENNQLHVTLTQKQEEIASLKERNVQLKEL) form a coiled coil. The segment at 294–319 (ALQSRDPKRPRLLPEPANTDTRPGNL) is disordered.

It belongs to the geminin family. Heterodimer (via coiled-coil domain) with GMNN (via coiled-coil domain); targets GMNN to the nucleus. Can form homodimers (in vitro, via coiled-coil domain), but these are much less stable than the heterodimer formed with GMNN.

The protein resides in the nucleus. In terms of biological role, transcription regulator specifically required for multiciliate cell differentiation. Acts in a multiprotein complex containing E2F4 and E2F5 that binds and activates genes required for centriole biogenesis. Required for the deuterosome-mediated acentriolar pathway. Plays a role in mitotic cell cycle progression by promoting cell cycle exit. Modulates GMNN activity by reducing its affinity for CDT1. In Homo sapiens (Human), this protein is Multicilin.